The sequence spans 235 residues: UPF0502 protein Bmul_3231/BMULJ_05293 (235 aa).

The protein belongs to the UPF0502 family.

This chain is UPF0502 protein Bmul_3231/BMULJ_05293, found in Burkholderia multivorans (strain ATCC 17616 / 249).